The following is a 364-amino-acid chain: Dihydroorotate dehydrogenase (quinone) (364 aa).

FMN is bound by residues 61 to 65 (AGFDK) and threonine 85. Lysine 65 serves as a coordination point for substrate. Substrate is bound at residue 110-114 (NRMGF). FMN-binding residues include asparagine 139 and asparagine 170. Asparagine 170 lines the substrate pocket. Serine 173 functions as the Nucleophile in the catalytic mechanism. Asparagine 175 contributes to the substrate binding site. Lysine 214 and alanine 242 together coordinate FMN. 243 to 244 (NT) contributes to the substrate binding site. FMN is bound by residues glycine 266, glycine 295, and 316–317 (YS).

This sequence belongs to the dihydroorotate dehydrogenase family. Type 2 subfamily. As to quaternary structure, monomer. It depends on FMN as a cofactor.

The protein localises to the cell membrane. It catalyses the reaction (S)-dihydroorotate + a quinone = orotate + a quinol. Its pathway is pyrimidine metabolism; UMP biosynthesis via de novo pathway; orotate from (S)-dihydroorotate (quinone route): step 1/1. Its function is as follows. Catalyzes the conversion of dihydroorotate to orotate with quinone as electron acceptor. This Rhodopseudomonas palustris (strain BisB5) protein is Dihydroorotate dehydrogenase (quinone).